The following is a 744-amino-acid chain: Tripartite motif-containing protein 3 (744 aa).

Position 2 is an N-acetylalanine (Ala-2). The tract at residues 2–290 (AKREDSPGPE…LAAQAFPERP (289 aa)) is interaction with KIF21B. Ser-7 is subject to Phosphoserine. The RING-type zinc finger occupies 22–63 (CSICLDRYRCPKVLPCLHTFCERCLQNYIPPQSLTLSCPVCR). The segment at 110 to 151 (GRPLSCPNHEGKTMEFYCEACETAMCGECRAGEHREHGTVLL) adopts a B box-type zinc-finger fold. Zn(2+) contacts are provided by Cys-115, His-118, Cys-138, and His-143. Residues 153-224 (DVVEQHKAAL…RKQALVSDLE (72 aa)) are a coiled coil. The Filamin repeat unit spans residues 317 to 418 (TTSAAAHETV…VRGSPFRVRA (102 aa)). The interval 420–462 (RPGDLPPSPDDVKRRVKSPGGPGSHVRQKAVRRPSSMYSTGGK) is disordered. Ser-427 is subject to Phosphoserine. 6 NHL repeats span residues 473–516 (VFRV…FSNE), 520–563 (KFRF…FSPE), 564–605 (GKFK…FQPN), 609–652 (VGRF…YSAD), 656–699 (LFKF…FDSS), and 700–743 (GSFL…YRYL).

The protein belongs to the TRIM/RBCC family. In terms of assembly, forms homooligomers. Interacts with TRIM2; this interaction reduces TRIM2 activity. Associates with myosin-Vb (MYO5B) and alpha-actinin-4 (ACTN4). Component of the CART complex, at least composed of ACTN4, HGS/HRS, MYO5B and TRIM3. Interacts with ZFYVE28/LST2. Interacts with KIF21B. As to expression, highly expressed in the brain, moderate levels in the lung, very low levels in the liver, kidney and heart. In the brain, expression was highest in the cerebellum. Expression in the brain is found at low levels at embryonic day 15 and then increases during the first two postnatal weeks before decreasing through adulthood.

The protein resides in the cytoplasm. It localises to the early endosome. Its subcellular location is the golgi apparatus. It is found in the trans-Golgi network. The protein localises to the cell projection. The protein resides in the dendrite. The catalysed reaction is S-ubiquitinyl-[E2 ubiquitin-conjugating enzyme]-L-cysteine + [acceptor protein]-L-lysine = [E2 ubiquitin-conjugating enzyme]-L-cysteine + N(6)-ubiquitinyl-[acceptor protein]-L-lysine.. Functionally, E3 ubiquitin ligase that plays essential roles in neuronal functions such as regulation of neuronal plasticity, learning, and memory. In addition to its neuronal functions, participates in other biological processes such as innate immunity or cell cycle regulation. Component of the cytoskeleton-associated recycling or transport complex in neurons, polyubiquitinates gamma-actin, thus regulating neuronal plasticity, learning, and memory. Ubiquitinates postsynaptic scaffold GKAP, a neuronal substrate involved in synaptic remodeling and thereby modulates dendritic spine morphology. Positively regulates motility of microtubule-dependent motor protein KIF21B. Induces growth arrest via its RING-dependent E3 ligase activity and ubiquinates CDKN1A. Positively regulates TLR3-mediated signaling by mediating 'Lys-63'-linked polyubiquitination of TLR3. In turn, promotes the recognition and sorting of polyubiquitinated TLR3 by the ESCRT complexes. This chain is Tripartite motif-containing protein 3 (Trim3), found in Rattus norvegicus (Rat).